The primary structure comprises 338 residues: Nicotinate-nucleotide--dimethylbenzimidazole phosphoribosyltransferase (338 aa).

Residue E305 is the Proton acceptor of the active site.

This sequence belongs to the CobT family.

It carries out the reaction 5,6-dimethylbenzimidazole + nicotinate beta-D-ribonucleotide = alpha-ribazole 5'-phosphate + nicotinate + H(+). It participates in nucleoside biosynthesis; alpha-ribazole biosynthesis; alpha-ribazole from 5,6-dimethylbenzimidazole: step 1/2. Functionally, catalyzes the synthesis of alpha-ribazole-5'-phosphate from nicotinate mononucleotide (NAMN) and 5,6-dimethylbenzimidazole (DMB). In Rhizobium leguminosarum bv. trifolii (strain WSM2304), this protein is Nicotinate-nucleotide--dimethylbenzimidazole phosphoribosyltransferase.